Consider the following 60-residue polypeptide: Prophage outer membrane lipoprotein RzoD (60 aa).

The signal sequence occupies residues 1 to 19; the sequence is MRKLKMMLCVMMLPLVVVG. Cys20 is lipidated: N-palmitoyl cysteine. The S-diacylglycerol cysteine moiety is linked to residue Cys20.

This sequence belongs to the lambdalikevirus o-spanin family. As to quaternary structure, homodimer; disulfide-linked. Interacts (via C-terminus) with RZ (via C-terminus). Part of the spanin complex which spans the entire periplasmic space. The spanin complex is composed of spanin, inner membrane subunit and spanin, outer membrane subunit.

It is found in the cell outer membrane. Functionally, component of the spanin complex that disrupts the outer membrane and causes cell lysis during virus exit. The spanin complex conducts the final step in cell lysis by disrupting the outer membrane after holin and endolysin action have permeabilized the inner membrane and degraded the host peptidoglycans. The protein is Prophage outer membrane lipoprotein RzoD (rzoD) of Escherichia coli (strain K12).